A 370-amino-acid polypeptide reads, in one-letter code: Pituitary-specific positive transcription factor 1 (370 aa).

The 9aaTAD signature appears at 5-13 (AFASSDNFV). The region spanning 202-276 (MDSPEIRELE…ILSKWLEEAE (75 aa)) is the POU-specific domain. Positions 292–351 (KRKRRTTISIAAKEALERHFGEQSKPSSQEIMRMAEGLNLEKEVVRVWFCNRRQREKRVK) form a DNA-binding region, homeobox.

The protein belongs to the POU transcription factor family. Class-1 subfamily. In terms of tissue distribution, pituitary gland.

It is found in the nucleus. In terms of biological role, transcription factor that activates growth hormone and prolactin genes. Specifically binds to the consensus sequence 5'-TAAAT-3'. The protein is Pituitary-specific positive transcription factor 1 (POU1F1) of Meleagris gallopavo (Wild turkey).